The primary structure comprises 357 residues: Alanine racemase, catabolic (357 aa).

The active-site Proton acceptor; specific for D-alanine is Lys33. Lys33 carries the N6-(pyridoxal phosphate)lysine modification. Lys122 is subject to N6-carboxylysine. Substrate is bound at residue Arg129. The active-site Proton acceptor; specific for L-alanine is Tyr253. Residue Met301 participates in substrate binding.

It belongs to the alanine racemase family. Homodimer. Pyridoxal 5'-phosphate serves as cofactor.

The catalysed reaction is L-alanine = D-alanine. Its function is as follows. Isomerizes L-alanine to D-alanine which is then oxidized to pyruvate by DadA. This is Alanine racemase, catabolic from Pseudomonas aeruginosa (strain ATCC 15692 / DSM 22644 / CIP 104116 / JCM 14847 / LMG 12228 / 1C / PRS 101 / PAO1).